The primary structure comprises 282 residues: 4-diphosphocytidyl-2-C-methyl-D-erythritol kinase (282 aa).

The active site involves Lys9. 98–108 (PMGGGLGGGSS) provides a ligand contact to ATP. Residue Asp140 is part of the active site.

It belongs to the GHMP kinase family. IspE subfamily. As to quaternary structure, homodimer.

It carries out the reaction 4-CDP-2-C-methyl-D-erythritol + ATP = 4-CDP-2-C-methyl-D-erythritol 2-phosphate + ADP + H(+). It participates in isoprenoid biosynthesis; isopentenyl diphosphate biosynthesis via DXP pathway; isopentenyl diphosphate from 1-deoxy-D-xylulose 5-phosphate: step 3/6. Functionally, catalyzes the phosphorylation of the position 2 hydroxy group of 4-diphosphocytidyl-2C-methyl-D-erythritol. This Salmonella heidelberg (strain SL476) protein is 4-diphosphocytidyl-2-C-methyl-D-erythritol kinase.